The primary structure comprises 147 residues: MSNFTAEDKAAITSLWGKVNVEDAGGETLGRLLVVYPWTQRFFDSFGSLSSPSAIMGNPKVKAHGVKVLTSLGEAIKNLDDLKGTFGSLSELHCDKLHVDPENFRLPGNVLVTVLAILHGKEFTPEVQASWQKMVAGVASALASRYH.

The Globin domain occupies 3-147; sequence NFTAEDKAAI…VASALASRYH (145 aa). Heme b is bound by residues H64 and H93.

The protein belongs to the globin family. In terms of assembly, heterotetramer of two alpha chains and two gamma chains in fetal hemoglobin (Hb F). In terms of tissue distribution, red blood cells.

Its function is as follows. Gamma chains make up the fetal hemoglobin F, in combination with alpha chains. This chain is Hemoglobin subunit gamma (HBG), found in Alouatta seniculus (Red howler monkey).